Reading from the N-terminus, the 360-residue chain is Glyceraldehyde-3-phosphate dehydrogenase (360 aa).

NAD(+)-binding positions include 13–14 (RI), Asp-35, and Arg-82. D-glyceraldehyde 3-phosphate contacts are provided by residues 153–155 (SCT), Thr-184, 213–214 (TG), and Arg-236. The active-site Nucleophile is the Cys-154. Asn-318 lines the NAD(+) pocket.

It belongs to the glyceraldehyde-3-phosphate dehydrogenase family. Homotetramer.

It carries out the reaction D-glyceraldehyde 3-phosphate + phosphate + NAD(+) = (2R)-3-phospho-glyceroyl phosphate + NADH + H(+). It participates in carbohydrate degradation; glycolysis; pyruvate from D-glyceraldehyde 3-phosphate: step 1/5. Key enzyme in glycolysis that catalyzes the first step of the pathway by converting D-glyceraldehyde 3-phosphate (G3P) into 3-phospho-D-glyceroyl phosphate. Essential for the maintenance of cellular ATP levels and carbohydrate metabolism. The polypeptide is Glyceraldehyde-3-phosphate dehydrogenase (Atriplex nummularia (Old man saltbush)).